An 84-amino-acid polypeptide reads, in one-letter code: U1-theraphotoxin-Hs1a (84 aa).

The first 22 residues, 1 to 22 (MKVTLIAILTCAAVLVLHTTAA), serve as a signal peptide directing secretion. The propeptide occupies 23–48 (EELEESQLMEVGMPDTELAAVDEERL). Disulfide bonds link Cys-51–Cys-65, Cys-55–Cys-76, and Cys-70–Cys-81.

Belongs to the neurotoxin 12 (Hwtx-2) family. 02 (Hwtx-2) subfamily. In terms of tissue distribution, expressed by the venom gland.

The protein localises to the secreted. Blocks neuromuscular transmission. Acts cooperatively to potentiate the activity of huwentoxin-I. Paralyzes locusts and kills mice following intracerebroventricular injection. The sequence is that of U1-theraphotoxin-Hs1a from Cyriopagopus schmidti (Chinese bird spider).